We begin with the raw amino-acid sequence, 303 residues long: Probable cell division protein WhiA (303 aa).

The segment at residues 272–303 (SIQQLADSLSKPLTKSGVNHRLRKINKIADEL) is a DNA-binding region (H-T-H motif).

This sequence belongs to the WhiA family.

Functionally, involved in cell division and chromosome segregation. The chain is Probable cell division protein WhiA from Streptococcus gordonii (strain Challis / ATCC 35105 / BCRC 15272 / CH1 / DL1 / V288).